We begin with the raw amino-acid sequence, 238 residues long: Large ribosomal subunit protein uL3 (238 aa).

Gln157 is modified (N5-methylglutamine).

Belongs to the universal ribosomal protein uL3 family. Part of the 50S ribosomal subunit. Forms a cluster with proteins L14 and L19. Methylated by PrmB.

In terms of biological role, one of the primary rRNA binding proteins, it binds directly near the 3'-end of the 23S rRNA, where it nucleates assembly of the 50S subunit. This is Large ribosomal subunit protein uL3 from Ruthia magnifica subsp. Calyptogena magnifica.